The following is a 433-amino-acid chain: Glutamate-1-semialdehyde 2,1-aminomutase (433 aa).

N6-(pyridoxal phosphate)lysine is present on lysine 273.

This sequence belongs to the class-III pyridoxal-phosphate-dependent aminotransferase family. HemL subfamily. As to quaternary structure, homodimer. It depends on pyridoxal 5'-phosphate as a cofactor.

It localises to the cytoplasm. The enzyme catalyses (S)-4-amino-5-oxopentanoate = 5-aminolevulinate. The protein operates within porphyrin-containing compound metabolism; protoporphyrin-IX biosynthesis; 5-aminolevulinate from L-glutamyl-tRNA(Glu): step 2/2. This Ralstonia nicotianae (strain ATCC BAA-1114 / GMI1000) (Ralstonia solanacearum) protein is Glutamate-1-semialdehyde 2,1-aminomutase.